The sequence spans 50 residues: Inter-alpha-trypsin inhibitor heavy chain H2 (50 aa).

Belongs to the ITIH family. As to quaternary structure, I-alpha-I plasma protease inhibitors are assembled from one or two heavy chains (HC) and one light chain, bikunin. Inter-alpha-inhibitor (I-alpha-I) is composed of ITIH1/HC1, ITIH2/HC2 and bikunin. In terms of processing, phosphorylated by FAM20C in the extracellular medium.

It is found in the secreted. In terms of biological role, may act as a carrier of hyaluronan in serum or as a binding protein between hyaluronan and other matrix protein, including those on cell surfaces in tissues to regulate the localization, synthesis and degradation of hyaluronan which are essential to cells undergoing biological processes. The protein is Inter-alpha-trypsin inhibitor heavy chain H2 (ITIH2) of Bos taurus (Bovine).